The chain runs to 650 residues: DNA mismatch repair protein MutL (650 aa).

The interval 374–420 is disordered; sequence SSLPDTQRSQRQPEKAASGQRSSVDAGLSQGSSAHRASQTGLGQSGN. A compositionally biased stretch (polar residues) spans 392–420; that stretch reads GQRSSVDAGLSQGSSAHRASQTGLGQSGN.

The protein belongs to the DNA mismatch repair MutL/HexB family.

In terms of biological role, this protein is involved in the repair of mismatches in DNA. It is required for dam-dependent methyl-directed DNA mismatch repair. May act as a 'molecular matchmaker', a protein that promotes the formation of a stable complex between two or more DNA-binding proteins in an ATP-dependent manner without itself being part of a final effector complex. The sequence is that of DNA mismatch repair protein MutL from Shewanella amazonensis (strain ATCC BAA-1098 / SB2B).